The following is a 162-amino-acid chain: MKPNYRIFSIVTAVSLVIDQATKILVDRTLELYQSIPVVPGLFSITYMRNKGAAFSFLSNFDYRRPFFIAVTLVAMAAIAITFRKLRDDQRLAAVSLSLIFSGAVGNLIDRVRLGEVIDFLDVYWKTHHWPAFNVADSAICVGVALLALDMIRDERRQSKDN.

The next 2 membrane-spanning stretches (helical) occupy residues P66–L86 and L92–V112. Catalysis depends on residues D119 and D137. The helical transmembrane segment at A132–I152 threads the bilayer.

Belongs to the peptidase A8 family.

Its subcellular location is the cell inner membrane. It carries out the reaction Release of signal peptides from bacterial membrane prolipoproteins. Hydrolyzes -Xaa-Yaa-Zaa-|-(S,diacylglyceryl)Cys-, in which Xaa is hydrophobic (preferably Leu), and Yaa (Ala or Ser) and Zaa (Gly or Ala) have small, neutral side chains.. Its pathway is protein modification; lipoprotein biosynthesis (signal peptide cleavage). Functionally, this protein specifically catalyzes the removal of signal peptides from prolipoproteins. The polypeptide is Lipoprotein signal peptidase (Geobacter metallireducens (strain ATCC 53774 / DSM 7210 / GS-15)).